The chain runs to 242 residues: Uridylate kinase (242 aa).

16–19 serves as a coordination point for ATP; sequence KVSG. Glycine 58 contacts UMP. Positions 59 and 63 each coordinate ATP. Residues aspartate 78 and 139–146 contribute to the UMP site; that span reads TGNPFCTT. ATP contacts are provided by threonine 166, glutamine 167, tyrosine 172, and aspartate 175.

This sequence belongs to the UMP kinase family. Homohexamer.

The protein resides in the cytoplasm. It catalyses the reaction UMP + ATP = UDP + ADP. It participates in pyrimidine metabolism; CTP biosynthesis via de novo pathway; UDP from UMP (UMPK route): step 1/1. Its activity is regulated as follows. Inhibited by UTP. In terms of biological role, catalyzes the reversible phosphorylation of UMP to UDP. This is Uridylate kinase from Rickettsia conorii (strain ATCC VR-613 / Malish 7).